Here is a 190-residue protein sequence, read N- to C-terminus: Tegument antigen (190 aa).

2 consecutive EF-hand domains span residues 8–43 (SQME…YRLD) and 51–77 (IARF…KVSE). Positions 55, 57, 59, 61, and 66 each coordinate Ca(2+).

In terms of tissue distribution, adult and schistosomula tegument.

This Schistosoma mansoni (Blood fluke) protein is Tegument antigen.